The primary structure comprises 1299 residues: Sophorolipid transporter (1299 aa).

The Cytoplasmic segment spans residues 1–64; sequence MVDDIQVEKR…FCTPLDVFLE (64 aa). The chain crosses the membrane as a helical span at residues 65–85; it reads ILALFFAAVHGAALPMFTLVV. Residues 65–356 enclose the ABC transmembrane type-1 1 domain; that stretch reads ILALFFAAVH…IAPNVRFLVK (292 aa). Residues 86 to 114 lie on the Extracellular side of the membrane; sequence GAIFNTFRDFTSYDLKGNEFQHKVNHLSL. Residues 115–135 form a helical membrane-spanning segment; it reads YFVYIGIGMLGSAFLESFLLV. Over 136–187 the chain is Cytoplasmic; sequence DRGEVLAGRYRKHYLSAVIRQNIAFYDKLGGGEVSTRIINDTNSIQEAISDK. A helical membrane pass occupies residues 188–208; sequence LGNVVQGIASFIAATVISFAS. At 209 to 214 the chain is on the extracellular side; sequence QWKLAC. A helical transmembrane segment spans residues 215 to 235; the sequence is ILLSAVGFMVITMGTGATFMA. The Cytoplasmic segment spans residues 236-293; it reads KYQLRSDAIYSQSGATVAEEALSAVRTTVAFGAQPHLAVKYEKVLDRVVKESKRSSYS. A helical transmembrane segment spans residues 294 to 314; sequence LGVMLACIWASTFWVYALALW. At 315-326 the chain is on the extracellular side; it reads QGSREIVSGSAD. Residues 327–347 traverse the membrane as a helical segment; it reads VGKIIVVITAMLLGSFQLGNI. Over 348–725 the chain is Cytoplasmic; sequence APNVRFLVKG…WGLNRKEWGY (378 aa). The ABC transporter 1 domain occupies 393 to 638; that stretch reads IELKNVKFRY…EGPYKALVDA (246 aa). 428–435 is an ATP binding site; that stretch reads GASGSGKS. Residues 681–690 are compositionally biased toward polar residues; that stretch reads SAGTQTTQPP. The tract at residues 681–703 is disordered; it reads SAGTQTTQPPEYQENDIPGVRNP. Residues 726–746 form a helical membrane-spanning segment; it reads ILIGSLASIILGYCYPAMAII. One can recognise an ABC transmembrane type-1 2 domain in the interval 727 to 1016; the sequence is LIGSLASIIL…IFSYAPNMNS (290 aa). Residues 747-769 lie on the Extracellular side of the membrane; it reads TGQTTGSMVLPPSEYGKMRHVVN. A helical membrane pass occupies residues 770–790; it reads IMGWWYFFVGCISFMTAFITI. The Cytoplasmic segment spans residues 791–848; it reads AALSLASDKLVKNIRLALFRQLMRMDIAFFDHKNNTPGALTSILAKEAKMIEGLSGAT. The chain crosses the membrane as a helical span at residues 849 to 869; the sequence is LGQIQQSLVTLIGGIVTGIPF. Residues 870-874 lie on the Extracellular side of the membrane; sequence NWRIG. The helical transmembrane segment at 875–895 threads the bilayer; it reads LVATSVVPVMLVCGFVRVWVL. Residues 896-954 are Cytoplasmic-facing; that stretch reads TQLSDRAREVYERSGSMASEYTSAVRTVQSLTRELDVVVKYTKTVDSQIFSSRIAIARS. A helical transmembrane segment spans residues 955–975; that stretch reads ALYYALSEGMTPWVVALVFWW. Over 976-987 the chain is Extracellular; sequence GSTVMRRGEASV. The chain crosses the membrane as a helical span at residues 988–1008; the sequence is AGYMTVFMAIITGSQAAGQIF. Residues 1009-1299 are Cytoplasmic-facing; that stretch reads SYAPNMNSAK…LVNLQGLGEI (291 aa). The region spanning 1053-1293 is the ABC transporter 2 domain; that stretch reads IEFRHVNFRY…NGWYAELVNL (241 aa). Residue 1088 to 1095 coordinates ATP; it reads GASGCGKS.

This sequence belongs to the ABC transporter superfamily. ABCB family. Multidrug resistance exporter (TC 3.A.1.201) subfamily.

It is found in the cell membrane. Transports acidic acylated and non-acylated sophorolipids (SLs) into the extracellular space, where they can be lactonized by lactone esterase. This chain is Sophorolipid transporter (mdr), found in Starmerella bombicola (Yeast).